The sequence spans 583 residues: Threonine--tRNA ligase (583 aa).

Residues 185 to 478 form a catalytic region; the sequence is DHRKLGRELN…LVEHYGGAFP (294 aa). Zn(2+)-binding residues include cysteine 278, histidine 329, and histidine 455.

This sequence belongs to the class-II aminoacyl-tRNA synthetase family. Homodimer. Zn(2+) is required as a cofactor.

The protein localises to the cytoplasm. The enzyme catalyses tRNA(Thr) + L-threonine + ATP = L-threonyl-tRNA(Thr) + AMP + diphosphate + H(+). In terms of biological role, catalyzes the attachment of threonine to tRNA(Thr) in a two-step reaction: L-threonine is first activated by ATP to form Thr-AMP and then transferred to the acceptor end of tRNA(Thr). Also edits incorrectly charged L-seryl-tRNA(Thr). The protein is Threonine--tRNA ligase of Borrelia duttonii (strain Ly).